Here is a 670-residue protein sequence, read N- to C-terminus: tRNA 5-methylaminomethyl-2-thiouridine biosynthesis bifunctional protein MnmC (670 aa).

Residues 1-242 are tRNA (mnm(5)s(2)U34)-methyltransferase; sequence MTFSVQHAEI…KRECLSGLKI (242 aa). The interval 269-670 is FAD-dependent cmnm(5)s(2)U34 oxidoreductase; sequence IGGGIASLCA…KKWLKGSKVE (402 aa).

It in the N-terminal section; belongs to the methyltransferase superfamily. tRNA (mnm(5)s(2)U34)-methyltransferase family. In the C-terminal section; belongs to the DAO family. The cofactor is FAD.

The protein resides in the cytoplasm. It catalyses the reaction 5-aminomethyl-2-thiouridine(34) in tRNA + S-adenosyl-L-methionine = 5-methylaminomethyl-2-thiouridine(34) in tRNA + S-adenosyl-L-homocysteine + H(+). Its function is as follows. Catalyzes the last two steps in the biosynthesis of 5-methylaminomethyl-2-thiouridine (mnm(5)s(2)U) at the wobble position (U34) in tRNA. Catalyzes the FAD-dependent demodification of cmnm(5)s(2)U34 to nm(5)s(2)U34, followed by the transfer of a methyl group from S-adenosyl-L-methionine to nm(5)s(2)U34, to form mnm(5)s(2)U34. The protein is tRNA 5-methylaminomethyl-2-thiouridine biosynthesis bifunctional protein MnmC of Haemophilus influenzae (strain ATCC 51907 / DSM 11121 / KW20 / Rd).